Consider the following 270-residue polypeptide: Glucosamine-6-phosphate deaminase (270 aa).

Asp-68 serves as the catalytic Proton acceptor; for enolization step. The For ring-opening step role is filled by Asp-145. His-147 acts as the Proton acceptor; for ring-opening step in catalysis. Glu-152 (for ring-opening step) is an active-site residue.

The protein belongs to the glucosamine/galactosamine-6-phosphate isomerase family. NagB subfamily.

It carries out the reaction alpha-D-glucosamine 6-phosphate + H2O = beta-D-fructose 6-phosphate + NH4(+). The protein operates within amino-sugar metabolism; N-acetylneuraminate degradation; D-fructose 6-phosphate from N-acetylneuraminate: step 5/5. Its function is as follows. Catalyzes the reversible isomerization-deamination of glucosamine 6-phosphate (GlcN6P) to form fructose 6-phosphate (Fru6P) and ammonium ion. This chain is Glucosamine-6-phosphate deaminase, found in Bifidobacterium longum (strain DJO10A).